The following is a 137-amino-acid chain: Putative pre-16S rRNA nuclease (137 aa).

The protein belongs to the YqgF nuclease family.

It is found in the cytoplasm. Its function is as follows. Could be a nuclease involved in processing of the 5'-end of pre-16S rRNA. In Clostridium botulinum (strain Alaska E43 / Type E3), this protein is Putative pre-16S rRNA nuclease.